The following is a 478-amino-acid chain: Protein nucleotidyltransferase YdiU (478 aa).

ATP is bound by residues G84, G86, R87, K107, D119, G120, R170, and R177. The active-site Proton acceptor is the D246. Positions 247 and 256 each coordinate Mg(2+). Residue D256 coordinates ATP.

This sequence belongs to the SELO family. The cofactor is Mg(2+). Mn(2+) is required as a cofactor.

The catalysed reaction is L-seryl-[protein] + ATP = 3-O-(5'-adenylyl)-L-seryl-[protein] + diphosphate. It carries out the reaction L-threonyl-[protein] + ATP = 3-O-(5'-adenylyl)-L-threonyl-[protein] + diphosphate. The enzyme catalyses L-tyrosyl-[protein] + ATP = O-(5'-adenylyl)-L-tyrosyl-[protein] + diphosphate. It catalyses the reaction L-histidyl-[protein] + UTP = N(tele)-(5'-uridylyl)-L-histidyl-[protein] + diphosphate. The catalysed reaction is L-seryl-[protein] + UTP = O-(5'-uridylyl)-L-seryl-[protein] + diphosphate. It carries out the reaction L-tyrosyl-[protein] + UTP = O-(5'-uridylyl)-L-tyrosyl-[protein] + diphosphate. Functionally, nucleotidyltransferase involved in the post-translational modification of proteins. It can catalyze the addition of adenosine monophosphate (AMP) or uridine monophosphate (UMP) to a protein, resulting in modifications known as AMPylation and UMPylation. The chain is Protein nucleotidyltransferase YdiU from Escherichia coli (strain K12 / MC4100 / BW2952).